The chain runs to 338 residues: tRNA N6-adenosine threonylcarbamoyltransferase (338 aa).

2 residues coordinate Fe cation: histidine 111 and histidine 115. Residues 134–138, aspartate 167, glycine 180, and asparagine 272 each bind substrate; that span reads LVSGG. Aspartate 300 lines the Fe cation pocket.

Belongs to the KAE1 / TsaD family. Fe(2+) is required as a cofactor.

The protein localises to the cytoplasm. The enzyme catalyses L-threonylcarbamoyladenylate + adenosine(37) in tRNA = N(6)-L-threonylcarbamoyladenosine(37) in tRNA + AMP + H(+). Functionally, required for the formation of a threonylcarbamoyl group on adenosine at position 37 (t(6)A37) in tRNAs that read codons beginning with adenine. Is involved in the transfer of the threonylcarbamoyl moiety of threonylcarbamoyl-AMP (TC-AMP) to the N6 group of A37, together with TsaE and TsaB. TsaD likely plays a direct catalytic role in this reaction. This chain is tRNA N6-adenosine threonylcarbamoyltransferase, found in Shewanella sp. (strain ANA-3).